We begin with the raw amino-acid sequence, 194 residues long: Adenylate kinase (194 aa).

Gly-8–Thr-16 contributes to the ATP binding site.

This sequence belongs to the archaeal adenylate kinase family.

It is found in the cytoplasm. It catalyses the reaction AMP + ATP = 2 ADP. The polypeptide is Adenylate kinase (adkA) (Sulfurisphaera tokodaii (strain DSM 16993 / JCM 10545 / NBRC 100140 / 7) (Sulfolobus tokodaii)).